The following is a 426-amino-acid chain: Glutamate-1-semialdehyde 2,1-aminomutase (426 aa).

N6-(pyridoxal phosphate)lysine is present on Lys265.

It belongs to the class-III pyridoxal-phosphate-dependent aminotransferase family. HemL subfamily. Homodimer. The cofactor is pyridoxal 5'-phosphate.

It localises to the cytoplasm. The catalysed reaction is (S)-4-amino-5-oxopentanoate = 5-aminolevulinate. Its pathway is porphyrin-containing compound metabolism; protoporphyrin-IX biosynthesis; 5-aminolevulinate from L-glutamyl-tRNA(Glu): step 2/2. In Actinobacillus pleuropneumoniae serotype 3 (strain JL03), this protein is Glutamate-1-semialdehyde 2,1-aminomutase.